A 272-amino-acid chain; its full sequence is uncharacterized protein (272 aa).

Residue Glu163 is part of the active site.

Belongs to the glycosyl hydrolase 25 family.

This is an uncharacterized protein from Escherichia coli O157:H7.